Reading from the N-terminus, the 131-residue chain is ATP synthase epsilon chain (131 aa).

Belongs to the ATPase epsilon chain family. In terms of assembly, F-type ATPases have 2 components, CF(1) - the catalytic core - and CF(0) - the membrane proton channel. CF(1) has five subunits: alpha(3), beta(3), gamma(1), delta(1), epsilon(1). CF(0) has three main subunits: a, b and c.

The protein resides in the cell inner membrane. Its function is as follows. Produces ATP from ADP in the presence of a proton gradient across the membrane. This chain is ATP synthase epsilon chain, found in Wolinella succinogenes (strain ATCC 29543 / DSM 1740 / CCUG 13145 / JCM 31913 / LMG 7466 / NCTC 11488 / FDC 602W) (Vibrio succinogenes).